Reading from the N-terminus, the 664-residue chain is Two-component response regulator ARR2 (664 aa).

A disordered region spans residues 1–21; that stretch reads MVNPGHGRGPDSGTAAGGSNS. Residues 29 to 144 enclose the Response regulatory domain; it reads RVLVVDDDPT…ALKNIWQHVV (116 aa). A 4-aspartylphosphate modification is found at Asp-80. Positions 151–215 are disordered; sequence WNVSEHSGGS…DDKEDSSSLK (65 aa). Over residues 165–178 the composition is skewed to basic and acidic residues; the sequence is GGDRDRQQQHREDA. Residues 180–191 are compositionally biased toward polar residues; that stretch reads NNSSSVNEGNGR. A compositionally biased stretch (acidic residues) spans 200–209; sequence EVDDQGDDKE. The short motif at 215 to 218 is the Nuclear localization signal element; sequence KKPR. Positions 218–268 form a DNA-binding region, myb-like GARP; it reads RVVWSVELHQQFVAAVNQLGVDKAVPKKILEMMNVPGLTRENVASHLQKYR. The segment covering 554-567 has biased composition (low complexity); sequence AAFSTSEAYSSSST. Positions 554–589 are disordered; sequence AAFSTSEAYSSSSTQRKRRETDATVVGEHGQNLQSP.

It belongs to the ARR family. Type-B subfamily. Binds the target DNA as a monomer. Interacts with histidine-containing phosphotransfer proteins. Post-translationally, two-component system major event consists of a His-to-Asp phosphorelay between a sensor histidine kinase (HK) and a response regulator (RR). In plants, the His-to-Asp phosphorelay involves an additional intermediate named Histidine-containing phosphotransfer protein (HPt). This multistep phosphorelay consists of a His-Asp-His-Asp sequential transfer of a phosphate group between first a His and an Asp of the HK protein, followed by the transfer to a conserved His of the HPt protein and finally the transfer to an Asp in the receiver domain of the RR protein. Phosphorylated in response to cytokinin mediated by AHK3. Detected in the whole plant. Predominantly expressed in pollen.

It is found in the nucleus. Functionally, transcriptional activator that binds specifically to the DNA sequence 5'-[AG]GATT-3'. Functions as a response regulator involved in His-to-Asp phosphorelay signal transduction system. Phosphorylation of the Asp residue in the receiver domain activates the ability of the protein to promote the transcription of target genes. Could directly activate some type-A response regulators in response to cytokinins. Involved in the expression of nuclear genes for components of mitochondrial complex I. Promotes cytokinin-mediated leaf longevity. Involved in the ethylene signaling pathway in an ETR1-dependent manner and in the cytokinin signaling pathway. The sequence is that of Two-component response regulator ARR2 (ARR2) from Arabidopsis thaliana (Mouse-ear cress).